We begin with the raw amino-acid sequence, 126 residues long: MYTIMLKAKLHMARVTHAVLDYEGSCAIDGELLDLAGIRENEQIQIYDVENGNRFTTYAIRGEAGSRLISINGAAAHQAQVGDRVIICSYAHYAEHELATHQPALVYLQDGNQISHTSHAIPVQFA.

Catalysis depends on S25, which acts as the Schiff-base intermediate with substrate; via pyruvic acid. S25 is subject to Pyruvic acid (Ser). T57 lines the substrate pocket. Y58 serves as the catalytic Proton donor. 73 to 75 (GAA) serves as a coordination point for substrate.

The protein belongs to the PanD family. As to quaternary structure, heterooctamer of four alpha and four beta subunits. The cofactor is pyruvate. Is synthesized initially as an inactive proenzyme, which is activated by self-cleavage at a specific serine bond to produce a beta-subunit with a hydroxyl group at its C-terminus and an alpha-subunit with a pyruvoyl group at its N-terminus.

It localises to the cytoplasm. It catalyses the reaction L-aspartate + H(+) = beta-alanine + CO2. It functions in the pathway cofactor biosynthesis; (R)-pantothenate biosynthesis; beta-alanine from L-aspartate: step 1/1. Its function is as follows. Catalyzes the pyruvoyl-dependent decarboxylation of aspartate to produce beta-alanine. The polypeptide is Aspartate 1-decarboxylase (Chromohalobacter salexigens (strain ATCC BAA-138 / DSM 3043 / CIP 106854 / NCIMB 13768 / 1H11)).